The following is a 386-amino-acid chain: Lysophosphatidylserine lipase ABHD12 (386 aa).

The Cytoplasmic portion of the chain corresponds to 1-66; it reads MRKRAEPVPP…YGLWSRLRMF (66 aa). The helical transmembrane segment at 67-87 threads the bilayer; the sequence is LIFLLGLYIAIPFLVKICPAI. The Extracellular segment spans residues 88-386; sequence QTQLVFLNLV…RDFLGNTEQQ (299 aa). The N-linked (GlcNAc...) asparagine glycan is linked to N114. S237 acts as the Nucleophile in catalysis. Active-site charge relay system residues include D324 and H363.

This sequence belongs to the serine esterase family.

It is found in the endoplasmic reticulum membrane. It catalyses the reaction 1-(9Z-octadecenoyl)-sn-glycero-3-phospho-L-serine + H2O = sn-glycero-3-phospho-L-serine + (9Z)-octadecenoate + H(+). The enzyme catalyses 1-(9Z-octadecenoyl)-sn-glycero-3-phospho-(1'-sn-glycerol) + H2O = sn-glycero-3-phospho-(1'-sn-glycerol) + (9Z)-octadecenoate + H(+). The catalysed reaction is 1-(9Z-octadecenoyl)-sn-glycero-3-phospho-(1D-myo-inositol) + H2O = sn-glycero-3-phospho-1D-myo-inositol + (9Z)-octadecenoate + H(+). It carries out the reaction 1-(9Z-octadecenoyl)-sn-glycero-3-phosphoethanolamine + H2O = sn-glycero-3-phosphoethanolamine + (9Z)-octadecenoate + H(+). It catalyses the reaction 1-(9Z-octadecenoyl)-sn-glycero-3-phosphocholine + H2O = 1-(9Z-octadecenoyl)-sn-glycerol + phosphocholine + H(+). The enzyme catalyses 2-(9Z-octadecenoyl)-glycerol + H2O = glycerol + (9Z)-octadecenoate + H(+). The catalysed reaction is 1-hexadecanoyl-sn-glycero-3-phospho-L-serine + H2O = sn-glycero-3-phospho-L-serine + hexadecanoate + H(+). It carries out the reaction 2-(5Z,8Z,11Z,14Z-eicosatetraenoyl)-glycerol + H2O = glycerol + (5Z,8Z,11Z,14Z)-eicosatetraenoate + H(+). It catalyses the reaction Hydrolyzes glycerol monoesters of long-chain fatty acids.. The enzyme catalyses 1-decanoylglycerol + H2O = decanoate + glycerol + H(+). The catalysed reaction is 1-dodecanoylglycerol + H2O = dodecanoate + glycerol + H(+). It carries out the reaction 1-tetradecanoylglycerol + H2O = tetradecanoate + glycerol + H(+). It catalyses the reaction 2-hexadecanoylglycerol + H2O = glycerol + hexadecanoate + H(+). The enzyme catalyses 1-(9Z-octadecenoyl)-glycerol + H2O = glycerol + (9Z)-octadecenoate + H(+). The catalysed reaction is 2-(9Z,12Z-octadecadienoyl)-glycerol + H2O = (9Z,12Z)-octadecadienoate + glycerol + H(+). It carries out the reaction 1-(5Z,8Z,11Z,14Z-eicosatetraenoyl)-glycerol + H2O = glycerol + (5Z,8Z,11Z,14Z)-eicosatetraenoate + H(+). It catalyses the reaction 1-(9Z,12Z-octadecadienoyl)-glycerol + H2O = (9Z,12Z)-octadecadienoate + glycerol + H(+). The enzyme catalyses 1-hexadecanoylglycerol + H2O = glycerol + hexadecanoate + H(+). The catalysed reaction is 1-octadecanoylglycerol + H2O = octadecanoate + glycerol + H(+). It carries out the reaction 1-octadecanoyl-2-(9,10-epoxyoctadecanoyl)-sn-glycero-3-phospho-L-serine + H2O = 9,10-epoxyoctadecanoate + 1-octadecanoyl-sn-glycero-3-phosphoserine + H(+). It catalyses the reaction 1-octadecanoyl-2-(10-hydroxyoctadecanoyl)-sn-glycero-3-phospho-L-serine + H2O = 1-octadecanoyl-sn-glycero-3-phosphoserine + 10-hydroxyoctadecanoate + H(+). The enzyme catalyses 1-hexadecanoyl-2-(10-hydroxyoctadecanoyl)-sn-glycero-3-phospho-L-serine + H2O = 10-hydroxyoctadecanoate + 1-hexadecanoyl-sn-glycero-3-phospho-L-serine + H(+). Lysophosphatidylserine (LPS) lipase that mediates the hydrolysis of lysophosphatidylserine, a class of signaling lipids that regulates immunological and neurological processes. Represents a major lysophosphatidylserine lipase in the brain, thereby playing a key role in the central nervous system. Also able to hydrolyze oxidized phosphatidylserine; oxidized phosphatidylserine is produced in response to severe inflammatory stress and constitutes a proapoptotic 'eat me' signal. Also has monoacylglycerol (MAG) lipase activity: hydrolyzes 2-arachidonoylglycerol (2-AG), thereby acting as a regulator of endocannabinoid signaling pathways. Has a strong preference for very-long-chain lipid substrates; substrate specificity is likely due to improved catalysis and not improved substrate binding. This Xenopus tropicalis (Western clawed frog) protein is Lysophosphatidylserine lipase ABHD12.